The sequence spans 249 residues: Ribosomal RNA small subunit methyltransferase J (249 aa).

S-adenosyl-L-methionine contacts are provided by residues 99–100, 115–116, 151–152, and Asp169; these read RD, ER, and SS.

It belongs to the methyltransferase superfamily. RsmJ family.

The protein localises to the cytoplasm. It carries out the reaction guanosine(1516) in 16S rRNA + S-adenosyl-L-methionine = N(2)-methylguanosine(1516) in 16S rRNA + S-adenosyl-L-homocysteine + H(+). Its function is as follows. Specifically methylates the guanosine in position 1516 of 16S rRNA. This chain is Ribosomal RNA small subunit methyltransferase J, found in Shewanella oneidensis (strain ATCC 700550 / JCM 31522 / CIP 106686 / LMG 19005 / NCIMB 14063 / MR-1).